A 42-amino-acid chain; its full sequence is Photosystem I reaction center subunit IX (42 aa).

Residues 8 to 28 (YLSTAPVIGVLWMTFTAGFII) form a helical membrane-spanning segment.

This sequence belongs to the PsaJ family.

Its subcellular location is the plastid. It localises to the chloroplast thylakoid membrane. Its function is as follows. May help in the organization of the PsaE and PsaF subunits. The protein is Photosystem I reaction center subunit IX of Pyropia yezoensis (Susabi-nori).